A 386-amino-acid polypeptide reads, in one-letter code: Tetratricopeptide repeat protein 4 (386 aa).

An N-acetylmethionine modification is found at Met1. A Phosphoserine modification is found at Ser51. TPR repeat units lie at residues 79 to 112, 117 to 150, and 151 to 184; these read AKTYKDEGNDYFKEKDYKKAVLSYSEGLKKKCAD, AVLYTNRAAAQYYLGNVRSSLNDVLAAKKLKPGH, and LKAIIRGALCHLELKHFAEAVNWCDEGLQIDAKE. The residue at position 244 (Ser244) is a Phosphoserine.

It belongs to the TTC4 family. In terms of assembly, interacts (via TPR repeats) with HSP90AB1. Interacts with HSPA8, CDC6 and TBK1. Interacts with isoform 1 and isoform 3 of MSL1. In terms of tissue distribution, expressed at high levels in the heart, testis, kidney, brain and tongue. Expressed at low levels in the stomach, lung and liver.

It localises to the nucleus. It is found in the nucleoplasm. The protein localises to the cytoplasm. May act as a co-chaperone for HSP90AB1. This Mus musculus (Mouse) protein is Tetratricopeptide repeat protein 4 (Ttc4).